A 512-amino-acid polypeptide reads, in one-letter code: Glycerol kinase (512 aa).

Residue Thr14 participates in ADP binding. Positions 14, 15, and 16 each coordinate ATP. A sn-glycerol 3-phosphate-binding site is contributed by Thr14. Arg18 provides a ligand contact to ADP. Sn-glycerol 3-phosphate contacts are provided by Arg83, Glu84, Tyr135, and Asp244. The glycerol site is built by Arg83, Glu84, Tyr135, Asp244, and Gln245. Residues Thr266, Gly309, Gly410, and Asn414 each coordinate ADP. Thr266, Gly309, and Gly410 together coordinate ATP.

This sequence belongs to the FGGY kinase family.

The catalysed reaction is glycerol + ATP = sn-glycerol 3-phosphate + ADP + H(+). Its pathway is polyol metabolism; glycerol degradation via glycerol kinase pathway; sn-glycerol 3-phosphate from glycerol: step 1/1. Its activity is regulated as follows. Inhibited by fructose 1,6-bisphosphate (FBP). In terms of biological role, key enzyme in the regulation of glycerol uptake and metabolism. Catalyzes the phosphorylation of glycerol to yield sn-glycerol 3-phosphate. This is Glycerol kinase from Gluconobacter oxydans (strain 621H) (Gluconobacter suboxydans).